A 629-amino-acid polypeptide reads, in one-letter code: Polygalacturonase non-catalytic subunit AroGP2 (629 aa).

The signal sequence occupies residues 1 to 27 (MHNKILVSSYILLVLLFSLSSFNIVVA). Positions 28–109 (KDGDESGNPF…MCAPDLLPSL (82 aa)) are excised as a propeptide. 7 N-linked (GlcNAc...) asparagine glycosylation sites follow: Asn125, Asn143, Asn255, Asn277, Asn333, Asn368, and Asn386. The span at 267-293 (YGQNANGENQNFTSYSTNGNNPQNNFK) shows a compositional bias: polar residues. A disordered region spans residues 267–305 (YGQNANGENQNFTSYSTNGNNPQNNFKNYGVGGNGPSET). The BURP domain occupies 414-628 (FFREKMLKSG…FENDMTWATA (215 aa)).

As to quaternary structure, interacts with polygalacturonase to form heterodimers.

It localises to the secreted. The protein localises to the extracellular space. The protein resides in the apoplast. It is found in the cell wall. In terms of biological role, non-catalytic subunit of polygalacturonase. The chain is Polygalacturonase non-catalytic subunit AroGP2 (GP2) from Solanum lycopersicum (Tomato).